The sequence spans 441 residues: Double-stranded RNA-binding protein 1 (441 aa).

DRBM domains are found at residues 1–71 (MYKS…HLSS), 86–155 (SYKS…SLPQ), and 169–237 (SYKN…HFED). Residues 69–88 (LSSLPLPPPPPPSENQSSYK) are disordered.

Functionally, binds double-stranded RNA. The polypeptide is Double-stranded RNA-binding protein 1 (DRB1) (Oryza sativa subsp. japonica (Rice)).